Consider the following 435-residue polypeptide: tRNA modification GTPase MnmE (435 aa).

(6S)-5-formyl-5,6,7,8-tetrahydrofolate-binding residues include Arg24, Glu82, and Lys122. One can recognise a TrmE-type G domain in the interval 219-360; that stretch reads GFIIAIAGPP…LIAEMERRLG (142 aa). Asn229 provides a ligand contact to K(+). GTP is bound by residues 229 to 234, 248 to 254, and 273 to 276; these read NAGKST, SPVPGTT, and DTAG. Ser233 contributes to the Mg(2+) binding site. 3 residues coordinate K(+): Ser248, Val250, and Thr253. Thr254 is a binding site for Mg(2+). Lys435 contributes to the (6S)-5-formyl-5,6,7,8-tetrahydrofolate binding site.

The protein belongs to the TRAFAC class TrmE-Era-EngA-EngB-Septin-like GTPase superfamily. TrmE GTPase family. In terms of assembly, homodimer. Heterotetramer of two MnmE and two MnmG subunits. The cofactor is K(+).

Its subcellular location is the cytoplasm. Functionally, exhibits a very high intrinsic GTPase hydrolysis rate. Involved in the addition of a carboxymethylaminomethyl (cmnm) group at the wobble position (U34) of certain tRNAs, forming tRNA-cmnm(5)s(2)U34. The sequence is that of tRNA modification GTPase MnmE from Azorhizobium caulinodans (strain ATCC 43989 / DSM 5975 / JCM 20966 / LMG 6465 / NBRC 14845 / NCIMB 13405 / ORS 571).